The chain runs to 229 residues: DNA mismatch repair protein MutH (229 aa).

It belongs to the MutH family.

The protein resides in the cytoplasm. Functionally, sequence-specific endonuclease that cleaves unmethylated GATC sequences. It is involved in DNA mismatch repair. This Escherichia coli O45:K1 (strain S88 / ExPEC) protein is DNA mismatch repair protein MutH.